Reading from the N-terminus, the 277-residue chain is Phosphatidylglycerol--prolipoprotein diacylglyceryl transferase (277 aa).

A run of 4 helical transmembrane segments spans residues 18 to 38, 54 to 74, 91 to 111, and 115 to 135; these read IAIY…YFMA, DLLV…YVIF, EGGI…IVFA, and GLSF…GQAI. Residue arginine 137 participates in a 1,2-diacyl-sn-glycero-3-phospho-(1'-sn-glycerol) binding. Transmembrane regions (helical) follow at residues 177–197, 205–225, and 236–256; these read QPTF…LLLL, GELF…IEGM, and LRTA…LWVY.

Belongs to the Lgt family.

The protein localises to the cell membrane. It catalyses the reaction L-cysteinyl-[prolipoprotein] + a 1,2-diacyl-sn-glycero-3-phospho-(1'-sn-glycerol) = an S-1,2-diacyl-sn-glyceryl-L-cysteinyl-[prolipoprotein] + sn-glycerol 1-phosphate + H(+). It participates in protein modification; lipoprotein biosynthesis (diacylglyceryl transfer). In terms of biological role, catalyzes the transfer of the diacylglyceryl group from phosphatidylglycerol to the sulfhydryl group of the N-terminal cysteine of a prolipoprotein, the first step in the formation of mature lipoproteins. The chain is Phosphatidylglycerol--prolipoprotein diacylglyceryl transferase from Shouchella clausii (strain KSM-K16) (Alkalihalobacillus clausii).